A 153-amino-acid chain; its full sequence is UPF0756 membrane protein lin1603 (153 aa).

4 helical membrane-spanning segments follow: residues 6–26, 54–74, 80–100, and 117–137; these read MLFL…SLII, WGVT…QIGF, SFKS…SILA, and LVFG…GPVI.

Belongs to the UPF0756 family.

It is found in the cell membrane. This Listeria innocua serovar 6a (strain ATCC BAA-680 / CLIP 11262) protein is UPF0756 membrane protein lin1603.